The chain runs to 450 residues: Bifunctional protein GlmU (450 aa).

The segment at 1-217 (MKTLILAAGL…VDEITGVNNR (217 aa)) is pyrophosphorylase. UDP-N-acetyl-alpha-D-glucosamine-binding positions include 6-9 (LAAG), lysine 20, glutamine 68, 73-74 (GT), 95-97 (YGD), glycine 134, glutamate 146, asparagine 161, and asparagine 215. Aspartate 97 contributes to the Mg(2+) binding site. Asparagine 215 provides a ligand contact to Mg(2+). A linker region spans residues 218–238 (IQLANLEKKIRRKINEKLMNQ). Residues 239-450 (GVRIIDPNAV…GGQKNANNKK (212 aa)) are N-acetyltransferase. Residues arginine 320 and lysine 338 each coordinate UDP-N-acetyl-alpha-D-glucosamine. The active-site Proton acceptor is histidine 350. UDP-N-acetyl-alpha-D-glucosamine is bound by residues tyrosine 353 and asparagine 364. Residues alanine 367, 373-374 (NY), serine 392, alanine 410, and arginine 427 each bind acetyl-CoA.

This sequence in the N-terminal section; belongs to the N-acetylglucosamine-1-phosphate uridyltransferase family. It in the C-terminal section; belongs to the transferase hexapeptide repeat family. Homotrimer. Mg(2+) is required as a cofactor.

It is found in the cytoplasm. It carries out the reaction alpha-D-glucosamine 1-phosphate + acetyl-CoA = N-acetyl-alpha-D-glucosamine 1-phosphate + CoA + H(+). The catalysed reaction is N-acetyl-alpha-D-glucosamine 1-phosphate + UTP + H(+) = UDP-N-acetyl-alpha-D-glucosamine + diphosphate. The protein operates within nucleotide-sugar biosynthesis; UDP-N-acetyl-alpha-D-glucosamine biosynthesis; N-acetyl-alpha-D-glucosamine 1-phosphate from alpha-D-glucosamine 6-phosphate (route II): step 2/2. Its pathway is nucleotide-sugar biosynthesis; UDP-N-acetyl-alpha-D-glucosamine biosynthesis; UDP-N-acetyl-alpha-D-glucosamine from N-acetyl-alpha-D-glucosamine 1-phosphate: step 1/1. It participates in bacterial outer membrane biogenesis; LPS lipid A biosynthesis. Functionally, catalyzes the last two sequential reactions in the de novo biosynthetic pathway for UDP-N-acetylglucosamine (UDP-GlcNAc). The C-terminal domain catalyzes the transfer of acetyl group from acetyl coenzyme A to glucosamine-1-phosphate (GlcN-1-P) to produce N-acetylglucosamine-1-phosphate (GlcNAc-1-P), which is converted into UDP-GlcNAc by the transfer of uridine 5-monophosphate (from uridine 5-triphosphate), a reaction catalyzed by the N-terminal domain. This is Bifunctional protein GlmU from Thermosipho melanesiensis (strain DSM 12029 / CIP 104789 / BI429).